A 696-amino-acid polypeptide reads, in one-letter code: Divalent metal transporter 1 (696 aa).

The interval 1–31 (MHQDNSMRRAINQSRNGGSDSCDINNDREHD) is disordered. Over 1 to 236 (MHQDNSMRRA…RSNRLSFMSK (236 aa)) the chain is Cytoplasmic. The span at 11–24 (INQSRNGGSDSCDI) shows a compositional bias: polar residues. A helical transmembrane segment spans residues 237 to 255 (LKMYFNYFGPGWIVAIAYL). Topologically, residues 256-288 (DPGNICGNLNVGLIRSDDFINVNSSVKDYTGYR) are vacuolar. N-linked (GlcNAc...) asparagine glycosylation is present at Asn-278. A helical membrane pass occupies residues 289-311 (LLWVLVYGHILGFIFHTLSMKLG). Over 312-331 (HITGLDLAALCRKEFSSKFS) the chain is Cytoplasmic. Residues 332–357 (YFLYICVQIAIWGAHLQAIIGVFVAI) form a helical membrane-spanning segment. The Vacuolar segment spans residues 358–362 (NLILG). The chain crosses the membrane as a helical span at residues 363–382 (IPVKIAILYTLIEAFAYSFL). Over 383–393 (ENKSLDLLEKV) the chain is Cytoplasmic. Residues 394–416 (LSLLIGILVCCFMFNVFMTPINF) form a helical membrane-spanning segment. The Vacuolar segment spans residues 417 to 435 (QEVASSILYPRIPKGKLLD). A helical transmembrane segment spans residues 436–455 (TMGLLGSVISAHIFYLHSNL). The Cytoplasmic portion of the chain corresponds to 456 to 475 (TSKKKPVIYNDRMVKRYNKL). Residues 476 to 499 (GTIESGGSLLVSCITNCIIVLTFA) form a helical membrane-spanning segment. Residues 500–529 (EVNISGDDRKADYNLFNAYDVMKKYFGKTS) are Vacuolar-facing. An N-linked (GlcNAc...) asparagine glycan is attached at Asn-502. The helical transmembrane segment at 530-546 (MYIWSFGLLSSGNNASF) threads the bilayer. The Cytoplasmic portion of the chain corresponds to 547–566 (MCEYASKSVFEGFLNKNVNP). A helical membrane pass occupies residues 567 to 585 (FFRVIFSRIILFIMLYAYV). The Vacuolar segment spans residues 586 to 596 (SYDKYTIDQLS). Residues 597–615 (NFINVVQILLLPLAIIPLY) form a helical membrane-spanning segment. Residues 616 to 634 (RFSIHKNVLGKFAIKGAFK) are Cytoplasmic-facing. The helical transmembrane segment at 635 to 657 (YLVFVLVISIIVANFLLTLFDFL) threads the bilayer. Residues 658-662 (QYAPS) lie on the Vacuolar side of the membrane. Residues 663-684 (NLYVIFIFISSIFYLLFIIYFF) traverse the membrane as a helical segment. The Cytoplasmic portion of the chain corresponds to 685–696 (NMPITKTYYKDS).

It belongs to the NRAMP (TC 2.A.55) family.

The protein localises to the vacuole membrane. The catalysed reaction is Fe(2+)(in) = Fe(2+)(out). Functionally, iron transporter. Required for parasite development during the blood stages. Required for full pathogenicity. The polypeptide is Divalent metal transporter 1 (Plasmodium yoelii).